A 239-amino-acid chain; its full sequence is Urease accessory protein UreE (239 aa).

The disordered stretch occupies residues 185-239 (VASPLDEPHGSGLHIHGIHSHGDGHSHSHDSHSHSHDSDHGHSHSHGDHDHDHKH). Positions 204 to 239 (SHGDGHSHSHDSHSHSHDSDHGHSHSHGDHDHDHKH) are enriched in basic and acidic residues.

This sequence belongs to the UreE family.

It is found in the cytoplasm. Involved in urease metallocenter assembly. Binds nickel. Probably functions as a nickel donor during metallocenter assembly. In Yersinia frederiksenii, this protein is Urease accessory protein UreE.